We begin with the raw amino-acid sequence, 313 residues long: Glyoxylate/hydroxypyruvate reductase A (313 aa).

Arg228 is a catalytic residue. Catalysis depends on His276, which acts as the Proton donor.

It belongs to the D-isomer specific 2-hydroxyacid dehydrogenase family. GhrA subfamily.

Its subcellular location is the cytoplasm. It catalyses the reaction glycolate + NADP(+) = glyoxylate + NADPH + H(+). The enzyme catalyses (R)-glycerate + NAD(+) = 3-hydroxypyruvate + NADH + H(+). The catalysed reaction is (R)-glycerate + NADP(+) = 3-hydroxypyruvate + NADPH + H(+). Functionally, catalyzes the NADPH-dependent reduction of glyoxylate and hydroxypyruvate into glycolate and glycerate, respectively. This is Glyoxylate/hydroxypyruvate reductase A from Photorhabdus laumondii subsp. laumondii (strain DSM 15139 / CIP 105565 / TT01) (Photorhabdus luminescens subsp. laumondii).